The chain runs to 373 residues: NAD-dependent protein deacylase SRT2 (373 aa).

The N-terminal 47 residues, 1–47 (MNMRRVFGGVSTDLFPSRSMYRPLQSGGNLVMLFKGCRRFVRTTCRV), are a transit peptide targeting the mitochondrion. Positions 75–373 (DPPNMEDIHK…DVGSLSVPAL (299 aa)) constitute a Deacetylase sirtuin-type domain. Residues 100-120 (GAGVSTECGIPDYRSPNGAYS) and 179-182 (QNVD) contribute to the NAD(+) site. The active-site Proton acceptor is His196. The Zn(2+) site is built by Cys204, Cys207, Cys271, and Cys274. Residues 311-313 (GSS), 337-339 (NIG), and Val355 contribute to the NAD(+) site.

It belongs to the sirtuin family. Class II subfamily. Binds to the promoter region of genes influenced by ethylene. Interacts with ENAP1; this interaction is enhanced in the presence of ethylene. Zn(2+) serves as cofactor.

The protein resides in the mitochondrion matrix. It is found in the nucleus. It carries out the reaction N(6)-acetyl-L-lysyl-[protein] + NAD(+) + H2O = 2''-O-acetyl-ADP-D-ribose + nicotinamide + L-lysyl-[protein]. Its function is as follows. NAD-dependent protein deacylase. Catalyzes the NAD-dependent hydrolysis of acyl groups from lysine residues. Involved in responses to ethylene leading to the transcriptional repression of some ethylene-responsive genes via the regulation of histone acetylation H3K9Ac. Negatively regulates plant basal defense against plant pathogens, possibly by suppressing salicylic acid biosynthesis. This Arabidopsis thaliana (Mouse-ear cress) protein is NAD-dependent protein deacylase SRT2.